Here is a 1369-residue protein sequence, read N- to C-terminus: DNA-directed RNA polymerase subunit beta' (1369 aa).

The segment at 1 to 26 is disordered; it reads MTSSSPKTRKSSTKSKAKRGSKSKKA. A compositionally biased stretch (basic residues) spans 7-24; sequence KTRKSSTKSKAKRGSKSK. C253, C320, C327, and C330 together coordinate Zn(2+). Residues 1294 to 1369 form a disordered region; it reads TVDMPSSPVA…LQEEGLLSDE (76 aa). Acidic residues predominate over residues 1342–1351; that stretch reads DDELSAEDQM. Residues 1357-1369 are compositionally biased toward low complexity; sequence LEGLQEEGLLSDE.

It belongs to the RNA polymerase beta' chain family. RpoC2 subfamily. As to quaternary structure, in cyanobacteria the RNAP catalytic core is composed of 2 alpha, 1 beta, 1 beta', 1 gamma and 1 omega subunit. When a sigma factor is associated with the core the holoenzyme is formed, which can initiate transcription. It depends on Zn(2+) as a cofactor.

The catalysed reaction is RNA(n) + a ribonucleoside 5'-triphosphate = RNA(n+1) + diphosphate. In terms of biological role, DNA-dependent RNA polymerase catalyzes the transcription of DNA into RNA using the four ribonucleoside triphosphates as substrates. This Prochlorococcus marinus (strain NATL2A) protein is DNA-directed RNA polymerase subunit beta'.